The sequence spans 257 residues: Hydroxyacylglutathione hydrolase (257 aa).

Residues H56, H58, D60, H61, H112, D131, and H169 each coordinate Zn(2+).

Belongs to the metallo-beta-lactamase superfamily. Glyoxalase II family. In terms of assembly, monomer. Requires Zn(2+) as cofactor.

The enzyme catalyses an S-(2-hydroxyacyl)glutathione + H2O = a 2-hydroxy carboxylate + glutathione + H(+). Its pathway is secondary metabolite metabolism; methylglyoxal degradation; (R)-lactate from methylglyoxal: step 2/2. Its function is as follows. Thiolesterase that catalyzes the hydrolysis of S-D-lactoyl-glutathione to form glutathione and D-lactic acid. The protein is Hydroxyacylglutathione hydrolase of Ectopseudomonas mendocina (strain ymp) (Pseudomonas mendocina).